The following is a 176-amino-acid chain: Flavodoxin-like domain-containing protein BilS (176 aa).

It functions in the pathway porphyrin-containing compound metabolism; protoheme degradation. Its function is as follows. Together with BilR, catalyzes reduction of mesobilirubin and/or bilirubin to urobilinogen, a key step during heme degradation. BilS is probably involved in electron transfer for the bilirubin reductase BilR. This is Flavodoxin-like domain-containing protein BilS from Clostridioides difficile (strain CD3).